A 442-amino-acid chain; its full sequence is MEKDKHSHFYNQRGDFRTEYNMLEELENKLINSRKTERAKIQQQLAKIHNNVKKLQNQLKDVKPTPDVVEKLREMMEEIENAINTFKEEQRLIYEELIQEEKTTNNELSAVSRRIESWALGNSETEKAFRAISSKVPVDRVTQRTLPEQVVEFEKFLQQTGGRQGGWDALDHQNFVKVRNKHKGKPTFMKEVVEHLPGRTLDEVQQHEKWYQKFLTLEEKKKESIQNWKTKKQQKKEEILKLKEKVDTVPLPSQSKAEDSPKQREEQRKKQKLAVEAWKKRKSLEMSAKLASQLREEEEKERKQQRERQRQSKLKLLLESYTQQRREQEEFLRLEQEIKEKAEKAEKRKTAADELARFQERDLHKLELKILDRQAKEEEKAEKQRRLTKLKEKVENNVSRDPSRLYKPTKGWEERTKKIGPSGSGPLLHIPHRAIPTWRQGI.

2 coiled-coil regions span residues 23 to 116 (LEEL…RRIE) and 217 to 249 (LEEKKKESIQNWKTKKQQKKEEILKLKEKVDTV). Disordered stretches follow at residues 245–272 (KVDTVPLPSQSKAEDSPKQREEQRKKQK), 289–312 (KLASQLREEEEKERKQQRERQRQS), and 392–442 (EKVE…RQGI). Basic and acidic residues-rich tracts occupy residues 256-268 (KAEDSPKQREEQR) and 294-310 (LREEEEKERKQQRERQR). Residues 281–400 (RKSLEMSAKL…KEKVENNVSR (120 aa)) adopt a coiled-coil conformation.

It localises to the cytoplasm. Its subcellular location is the cytoskeleton. The protein resides in the microtubule organizing center. It is found in the centrosome. The protein localises to the centriolar satellite. The polypeptide is Coiled-coil domain-containing protein 112 (Ccdc112) (Mus musculus (Mouse)).